The primary structure comprises 734 residues: Photosystem I P700 chlorophyll a apoprotein A2 (734 aa).

Transmembrane regions (helical) follow at residues 46–69, 135–158, 175–199, 273–291, 330–353, 369–395, 417–439, and 517–535; these read IFAS…FHVA, LYTG…LHLQ, LNHH…HVAI, IAHH…GHMY, IHFQ…QHMY, AALY…IFFI, AIIS…LYVH, and FLVH…LILV. Residues Cys-559 and Cys-568 each coordinate [4Fe-4S] cluster. A run of 2 helical transmembrane segments spans residues 575-596 and 643-665; these read AFYL…YWHW and LSVW…MFLI. Positions 654, 662, and 670 each coordinate chlorophyll a. Phylloquinone is bound at residue Trp-671. The chain crosses the membrane as a helical span at residues 707 to 727; that stretch reads LVGLAHFSVGYIFTYAAFLIA.

Belongs to the PsaA/PsaB family. The PsaA/B heterodimer binds the P700 chlorophyll special pair and subsequent electron acceptors. PSI consists of a core antenna complex that captures photons, and an electron transfer chain that converts photonic excitation into a charge separation. The eukaryotic PSI reaction center is composed of at least 11 subunits. P700 is a chlorophyll a/chlorophyll a' dimer, A0 is one or more chlorophyll a, A1 is one or both phylloquinones and FX is a shared 4Fe-4S iron-sulfur center. serves as cofactor.

It localises to the plastid. Its subcellular location is the chloroplast thylakoid membrane. The enzyme catalyses reduced [plastocyanin] + hnu + oxidized [2Fe-2S]-[ferredoxin] = oxidized [plastocyanin] + reduced [2Fe-2S]-[ferredoxin]. Its function is as follows. PsaA and PsaB bind P700, the primary electron donor of photosystem I (PSI), as well as the electron acceptors A0, A1 and FX. PSI is a plastocyanin-ferredoxin oxidoreductase, converting photonic excitation into a charge separation, which transfers an electron from the donor P700 chlorophyll pair to the spectroscopically characterized acceptors A0, A1, FX, FA and FB in turn. Oxidized P700 is reduced on the lumenal side of the thylakoid membrane by plastocyanin. The sequence is that of Photosystem I P700 chlorophyll a apoprotein A2 from Vitis vinifera (Grape).